Here is a 190-residue protein sequence, read N- to C-terminus: MAEKTQKSVKIAPGAVVCVESEIRGDVTIGPRTVIHPKARIIAEAGPIVIGEGNLIEEQALIINAYPDNITPDTEDPEPKPMIIGTNNVFEVGCYSQAMKMGDNNVIESKAYVGRNVILTSGCIIGACCNLNTFEVIPENTVIYGADCLRRVQTERPQPQTLQLDLLMKILPNYHHLKKTMKGSSTPVKN.

Residue Thr186 is modified to Phosphothreonine; by CDK1.

It belongs to the dynactin subunits 5/6 family. Dynactin subunit 6 subfamily. In terms of assembly, subunit of dynactin, a multiprotein complex part of a tripartite complex with dynein and a adapter, such as BICDL1, BICD2 or HOOK3. The dynactin complex is built around ACTR1A/ACTB filament and consists of an actin-related filament composed of a shoulder domain, a pointed end and a barbed end. Its length is defined by its flexible shoulder domain. The soulder is composed of 2 DCTN1 subunits, 4 DCTN2 and 2 DCTN3. The 4 DCNT2 (via N-terminus) bind the ACTR1A filament and act as molecular rulers to determine the length. The pointed end is important for binding dynein-dynactin cargo adapters. Consists of 4 subunits: ACTR10, DCNT4, DCTN5 and DCTN6. Within the complex DCTN6 forms a heterodimer with DCTN5. The barbed end is composed of a CAPZA1:CAPZB heterodimers, which binds ACTR1A/ACTB filament and dynactin and stabilizes dynactin. Interacts with PLK1. Interacts with N4BP2L1. Post-translationally, phosphorylation at Thr-186 by CDK1 during mitotic prometaphase creates a binding site for PLK1 that facilitates its recruitment to kinetochores.

It is found in the cytoplasm. It localises to the cytoskeleton. The protein resides in the chromosome. Its subcellular location is the centromere. The protein localises to the kinetochore. In terms of biological role, part of the dynactin complex that activates the molecular motor dynein for ultra-processive transport along microtubules. The protein is Dynactin subunit 6 (DCTN6) of Pongo abelii (Sumatran orangutan).